Reading from the N-terminus, the 316-residue chain is Low affinity immunoglobulin gamma Fc region receptor II-a (316 aa).

Residues 1–35 (MAMETQMSQNVCPRNLWLLQPLTVLLLLASADSQA) form the signal peptide. Residues 36–216 (APPKAVLKLE…PSVGSSSPVG (181 aa)) lie on the Extracellular side of the membrane. Ig-like C2-type domains follow at residues 38 to 117 (PKAV…VHLT) and 121 to 203 (EWLV…VTIT). 2 disulfide bridges follow: cysteine 61-cysteine 103 and cysteine 142-cysteine 186. N-linked (GlcNAc...) asparagine glycosylation is found at asparagine 96, asparagine 170, and asparagine 177. A helical membrane pass occupies residues 217–239 (IIVAVVIATAVAAIVAAVVALIY). At 240-316 (CRKKRISANS…PPNDHVNSNN (77 aa)) the chain is on the cytoplasmic side. Phosphotyrosine; by SRC-type Tyr-kinases is present on residues tyrosine 287 and tyrosine 303.

As to quaternary structure, interacts with INPP5D/SHIP1 and INPPL1/SHIP2, regulating its function. Interacts with APCS and FGR. Interacts with HCK. Post-translationally, phosphorylated by SRC-type Tyr-kinases such as HCK, LYN, BLK, FYN and SYK.

The protein resides in the cell membrane. In terms of biological role, binds to the Fc region of immunoglobulins gamma. Low affinity receptor. By binding to IgG it initiates cellular responses against pathogens and soluble antigens. Promotes phagocytosis of opsonized antigens. The sequence is that of Low affinity immunoglobulin gamma Fc region receptor II-a (FCGR2A) from Pan troglodytes (Chimpanzee).